A 185-amino-acid polypeptide reads, in one-letter code: Protein GrpE (185 aa).

The segment covering 1 to 20 (MSQEKKEELQSEAQVTKEET) has biased composition (basic and acidic residues). The segment at 1 to 28 (MSQEKKEELQSEAQVTKEETPQANEAAA) is disordered.

The protein belongs to the GrpE family. As to quaternary structure, homodimer.

It is found in the cytoplasm. Its function is as follows. Participates actively in the response to hyperosmotic and heat shock by preventing the aggregation of stress-denatured proteins, in association with DnaK and GrpE. It is the nucleotide exchange factor for DnaK and may function as a thermosensor. Unfolded proteins bind initially to DnaJ; upon interaction with the DnaJ-bound protein, DnaK hydrolyzes its bound ATP, resulting in the formation of a stable complex. GrpE releases ADP from DnaK; ATP binding to DnaK triggers the release of the substrate protein, thus completing the reaction cycle. Several rounds of ATP-dependent interactions between DnaJ, DnaK and GrpE are required for fully efficient folding. This Sulfurimonas denitrificans (strain ATCC 33889 / DSM 1251) (Thiomicrospira denitrificans (strain ATCC 33889 / DSM 1251)) protein is Protein GrpE.